A 416-amino-acid polypeptide reads, in one-letter code: Enolase (416 aa).

Glutamine 156 provides a ligand contact to (2R)-2-phosphoglycerate. Glutamate 200 (proton donor) is an active-site residue. Mg(2+) is bound by residues aspartate 236, glutamate 281, and aspartate 308. (2R)-2-phosphoglycerate-binding residues include lysine 333, arginine 362, serine 363, and lysine 384. The active-site Proton acceptor is lysine 333.

This sequence belongs to the enolase family. Mg(2+) serves as cofactor.

The protein localises to the cytoplasm. Its subcellular location is the secreted. The protein resides in the cell surface. The enzyme catalyses (2R)-2-phosphoglycerate = phosphoenolpyruvate + H2O. Its pathway is carbohydrate degradation; glycolysis; pyruvate from D-glyceraldehyde 3-phosphate: step 4/5. Functionally, catalyzes the reversible conversion of 2-phosphoglycerate (2-PG) into phosphoenolpyruvate (PEP). It is essential for the degradation of carbohydrates via glycolysis. This Methanothermobacter thermautotrophicus (strain ATCC 29096 / DSM 1053 / JCM 10044 / NBRC 100330 / Delta H) (Methanobacterium thermoautotrophicum) protein is Enolase.